The primary structure comprises 208 residues: MSTPHWFDQGSLVLASNNKGKVAEFEKLFEQLKLPVEIIPQGHLNIPDAIEDGLSFIENAIIKARHASKISGKPAMADDSGICVPVLGGAPGIYSARYAGEHGDDAANNAKLLNDLLPFRKNGEAIEGMFVCVLALVTHAEDPLPQIFQGIWHGEILEAPRGENGFGYDPLFWLPELQVSSAELSKEEKNKISHRGQAMQLFRESLQK.

A substrate-binding site is contributed by 16 to 21 (SNNKGK). The Proton acceptor role is filled by aspartate 79. Aspartate 79 provides a ligand contact to Mg(2+). Substrate is bound by residues serine 80, 166–169 (FGYD), lysine 189, and 194–195 (HR).

The protein belongs to the HAM1 NTPase family. Homodimer. Mg(2+) serves as cofactor.

The catalysed reaction is XTP + H2O = XMP + diphosphate + H(+). It catalyses the reaction dITP + H2O = dIMP + diphosphate + H(+). The enzyme catalyses ITP + H2O = IMP + diphosphate + H(+). In terms of biological role, pyrophosphatase that catalyzes the hydrolysis of nucleoside triphosphates to their monophosphate derivatives, with a high preference for the non-canonical purine nucleotides XTP (xanthosine triphosphate), dITP (deoxyinosine triphosphate) and ITP. Seems to function as a house-cleaning enzyme that removes non-canonical purine nucleotides from the nucleotide pool, thus preventing their incorporation into DNA/RNA and avoiding chromosomal lesions. This Acinetobacter baumannii (strain ACICU) protein is dITP/XTP pyrophosphatase.